Reading from the N-terminus, the 562-residue chain is Transcriptional adapter 2A (562 aa).

The ZZ-type zinc-finger motif lies at 91–146 (KDANRCATCRCSLTEPYIKCSECLDTLLCLQCFSRGKEAFSHRNNHAYIIVRDNIQ). 8 residues coordinate Zn(2+): Cys96, Cys99, Cys110, Cys113, Cys119, Cys122, His132, and His136. Positions 154-198 (WTARDERILLKTLRTHGYGNWEAVSQALDQRHEPAEVRRHYHDCY) constitute an SANT domain. The region spanning 471–562 (CLTPTEYNFS…GHISRPPSYG (92 aa)) is the SWIRM domain.

Component of the Ada2a-containing (ATAC) complex composed of at least Ada2a, Atac1, Hcf, Ada3, Gcn5, Mocs2B, Charac-14, Atac3, Atac2, NC2beta and wds. Component of a complex that does not include Gcn5 or Ada3.

The protein localises to the nucleus. It is found in the chromosome. Component of the histone acetyltransferase (HAT) complex ATAC; predominantly involved in acetylation of histone H4, including at Lys-6 (H4K5ac) and Lys-13 (H4K12ac). May be part of several different complexes, including Gcn5-independent complexes involved in RNA polymerase II-dependent transcription. The polypeptide is Transcriptional adapter 2A (Drosophila melanogaster (Fruit fly)).